We begin with the raw amino-acid sequence, 299 residues long: tRNA dimethylallyltransferase (299 aa).

10–17 (GPTASGKS) provides a ligand contact to ATP. A substrate-binding site is contributed by 12-17 (TASGKS).

It belongs to the IPP transferase family. Monomer. It depends on Mg(2+) as a cofactor.

The enzyme catalyses adenosine(37) in tRNA + dimethylallyl diphosphate = N(6)-dimethylallyladenosine(37) in tRNA + diphosphate. Catalyzes the transfer of a dimethylallyl group onto the adenine at position 37 in tRNAs that read codons beginning with uridine, leading to the formation of N6-(dimethylallyl)adenosine (i(6)A). The sequence is that of tRNA dimethylallyltransferase from Malacoplasma penetrans (strain HF-2) (Mycoplasma penetrans).